Consider the following 247-residue polypeptide: Carboxy-S-adenosyl-L-methionine synthase (247 aa).

Residues Tyr40, 65 to 67, 90 to 91, 122 to 123, Asn137, and Arg204 each bind S-adenosyl-L-methionine; these read GAS, DN, and DI.

This sequence belongs to the class I-like SAM-binding methyltransferase superfamily. Cx-SAM synthase family. In terms of assembly, homodimer.

The enzyme catalyses prephenate + S-adenosyl-L-methionine = carboxy-S-adenosyl-L-methionine + 3-phenylpyruvate + H2O. Catalyzes the conversion of S-adenosyl-L-methionine (SAM) to carboxy-S-adenosyl-L-methionine (Cx-SAM). This Ectopseudomonas mendocina (strain ymp) (Pseudomonas mendocina) protein is Carboxy-S-adenosyl-L-methionine synthase.